The primary structure comprises 414 residues: 3-oxoacyl-[acyl-carrier-protein] synthase 2 (414 aa).

In terms of domain architecture, Ketosynthase family 3 (KS3) spans 3–413 (KRRVVVTGMG…GTNGSLIFKR (411 aa)). Catalysis depends on for beta-ketoacyl synthase activity residues Cys-164, His-304, and His-342.

It belongs to the thiolase-like superfamily. Beta-ketoacyl-ACP synthases family. Homodimer.

The catalysed reaction is a fatty acyl-[ACP] + malonyl-[ACP] + H(+) = a 3-oxoacyl-[ACP] + holo-[ACP] + CO2. It catalyses the reaction (9Z)-hexadecenoyl-[ACP] + malonyl-[ACP] + H(+) = 3-oxo-(11Z)-octadecenoyl-[ACP] + holo-[ACP] + CO2. Its pathway is lipid metabolism; fatty acid biosynthesis. Its function is as follows. Involved in the type II fatty acid elongation cycle. Catalyzes the elongation of a wide range of acyl-ACP by the addition of two carbons from malonyl-ACP to an acyl acceptor. Can efficiently catalyze the conversion of palmitoleoyl-ACP (cis-hexadec-9-enoyl-ACP) to cis-vaccenoyl-ACP (cis-octadec-11-enoyl-ACP), an essential step in the thermal regulation of fatty acid composition. This is 3-oxoacyl-[acyl-carrier-protein] synthase 2 (fabF) from Vibrio cholerae serotype O1 (strain ATCC 39315 / El Tor Inaba N16961).